Reading from the N-terminus, the 372-residue chain is MWQAEVRVDLDAIRENVSWLRSGSAAELMAVVKGDGYGHGMVPAALAALDGGADWLGVCTLDEALTLRREGITAPILAWLLAPGLPLHEGVAAGIDLGAASVAQLDEMVQAGRTAGRPARLHLKIDTGLSRGGATVSDWPGLLTAAAKAQADGTVEVVGVWSHFVYADAPGHPTTDRQLAVFHEGLDMVEKAGLRPRYRHLANSAATLTRPDAHFDLVRPGLAVYGLSPVAGESFGLRPAMTARARVMLTKQVPAGAGVSYGHTYTTERDSTLAVIPLGYADGVPRSASNSGPVHLGGVRRTISGRVCMDQFVLDCGDDPVAPGDVAVLFGSGRNGEPTADDWAEAVGTINYEIVTRFGSTRVPRSYDGERP.

The Proton acceptor; specific for D-alanine role is filled by Lys33. Lys33 is modified (N6-(pyridoxal phosphate)lysine). Arg131 lines the substrate pocket. The Proton acceptor; specific for L-alanine role is filled by Tyr261. A substrate-binding site is contributed by Met309.

It belongs to the alanine racemase family. The cofactor is pyridoxal 5'-phosphate.

The enzyme catalyses L-alanine = D-alanine. It participates in amino-acid biosynthesis; D-alanine biosynthesis; D-alanine from L-alanine: step 1/1. Its function is as follows. Catalyzes the interconversion of L-alanine and D-alanine. May also act on other amino acids. In Salinispora arenicola (strain CNS-205), this protein is Alanine racemase (alr).